The sequence spans 188 residues: Elongation factor P-like protein (188 aa).

The protein belongs to the elongation factor P family.

The chain is Elongation factor P-like protein from Alcanivorax borkumensis (strain ATCC 700651 / DSM 11573 / NCIMB 13689 / SK2).